Consider the following 251-residue polypeptide: Meso-2,3-butanediol dehydrogenase (251 aa).

6 residues coordinate NAD(+): Asn-15, Met-17, Asp-36, Asp-60, Val-61, and Asn-87. (R)-acetoin-binding residues include Ser-138, Ser-140, and Tyr-151. Ser-138 contributes to the (S)-acetoin binding site. Residues Tyr-151, Lys-155, Val-184, and Thr-186 each coordinate NAD(+). (S)-acetoin is bound at residue Tyr-151. The active-site Proton acceptor is Tyr-151.

The protein belongs to the short-chain dehydrogenases/reductases (SDR) family. In terms of assembly, homotetramer; dimer of dimers.

The catalysed reaction is (R,S)-butane-2,3-diol + NAD(+) = (R)-acetoin + NADH + H(+). The enzyme catalyses (S,S)-butane-2,3-diol + NAD(+) = (S)-acetoin + NADH + H(+). It carries out the reaction (S)-acetoin + NAD(+) = diacetyl + NADH + H(+). Its activity is regulated as follows. Oxidation of meso-2,3-butanediol is enhanced in the presence of Fe(2+). Reduction of diacetyl and (3S/3R)-acetoin is slightly enhanced in the presence of Mg(2+) and Mn(2+). Activity is inhibited by several metal ions, particularly Fe(3+) for reduction of diacetyl and acetoin. In terms of biological role, catalyzes the NAD-dependent oxidation of meso-2,3-butanediol to (3R)-acetoin, and of (2S,3S)-2,3-butanediol to (3S)-acetoin, with much lower efficiency. Can also oxidize several primary alcohols such as glycerol, 1-2-pentanediol and 1,2-propanediol, with lower activity. Cannot use (2R,3R)-2,3-butanediol. In the presence of NADH, catalyzes the reduction of (3R)-acetoin to meso-2,3-butanediol, of (3S)-acetoin to (2S,3S)-2,3-butanediol and of diacetyl to (3S)-acetoin. No activity is detected with NADPH/NADP(+). This Serratia marcescens protein is Meso-2,3-butanediol dehydrogenase.